Reading from the N-terminus, the 199-residue chain is Recombination protein RecR (199 aa).

Residues 58–73 (CRICYNITDTEVCNIC) form a C4-type zinc finger. Residues 81–176 (SLICVVSHPM…KVTRIAHGVP (96 aa)) enclose the Toprim domain.

The protein belongs to the RecR family.

Functionally, may play a role in DNA repair. It seems to be involved in an RecBC-independent recombinational process of DNA repair. It may act with RecF and RecO. The chain is Recombination protein RecR from Thermoanaerobacter sp. (strain X514).